The primary structure comprises 881 residues: Fanconi anemia core complex-associated protein 100 (881 aa).

Residues 94–119 form a disordered region; that stretch reads GRSRSTSQDDRDSEDGDQPSPVIPVD. At Ser667 the chain carries Phosphoserine.

As to quaternary structure, belongs to the multisubunit FA complex composed of FANCA, FANCB, FANCC, FANCE, FANCF, FANCG, FANCL/PHF9, FANCM, FAAP24 and FAAP100. Forms a subcomplex with FANCB and FANCL.

Its subcellular location is the nucleus. Plays a role in Fanconi anemia-associated DNA damage response network. Regulates FANCD2 monoubiquitination and the stability of the FA core complex. Induces chromosomal instability as well as hypersensitivity to DNA cross-linking agents, when repressed. In Homo sapiens (Human), this protein is Fanconi anemia core complex-associated protein 100.